The sequence spans 630 residues: tRNA uridine 5-carboxymethylaminomethyl modification enzyme MnmG (630 aa).

Position 13–18 (13–18 (GGGHAG)) interacts with FAD. Residue 273 to 287 (GPRYCPSIEDKIHRF) coordinates NAD(+).

Belongs to the MnmG family. As to quaternary structure, homodimer. Heterotetramer of two MnmE and two MnmG subunits. FAD is required as a cofactor.

The protein resides in the cytoplasm. NAD-binding protein involved in the addition of a carboxymethylaminomethyl (cmnm) group at the wobble position (U34) of certain tRNAs, forming tRNA-cmnm(5)s(2)U34. In Pseudomonas entomophila (strain L48), this protein is tRNA uridine 5-carboxymethylaminomethyl modification enzyme MnmG.